A 197-amino-acid polypeptide reads, in one-letter code: Ribonuclease HII (197 aa).

One can recognise an RNase H type-2 domain in the interval 14-197; sequence GIIAGVDEVG…RKNFAPIRIL (184 aa). A divalent metal cation contacts are provided by aspartate 20, glutamate 21, and aspartate 112.

Belongs to the RNase HII family. Mn(2+) is required as a cofactor. Mg(2+) serves as cofactor.

It is found in the cytoplasm. It catalyses the reaction Endonucleolytic cleavage to 5'-phosphomonoester.. Endonuclease that specifically degrades the RNA of RNA-DNA hybrids. In Wolbachia pipientis subsp. Culex pipiens (strain wPip), this protein is Ribonuclease HII.